A 419-amino-acid chain; its full sequence is Phosphoglycerate kinase (419 aa).

Residues 42–44 (DLN), R58, 81–84 (HLGR), R135, and R168 contribute to the substrate site. ATP-binding positions include K219, E341, and 367-370 (GGDT).

Belongs to the phosphoglycerate kinase family. As to quaternary structure, monomer.

It localises to the cytoplasm. The enzyme catalyses (2R)-3-phosphoglycerate + ATP = (2R)-3-phospho-glyceroyl phosphate + ADP. The protein operates within carbohydrate degradation; glycolysis; pyruvate from D-glyceraldehyde 3-phosphate: step 2/5. This is Phosphoglycerate kinase from Ralstonia nicotianae (strain ATCC BAA-1114 / GMI1000) (Ralstonia solanacearum).